The primary structure comprises 202 residues: MGNSKSGALSKEILEELQLNTKFTEEELSSWYQSFLKECPSGRITRQEFQTIYSKFFPEADPKAYAQHVFRSFDANSDGTLDFKEYVIALHMTSAGKTNQKLEWAFSLYDVDGNGTISKNEVLEIVTAIFKMISPEDTKHLPEDENTPEKRAEKIWGFFGKKDDDKLTEKEFIEGTLANKEILRLIQFEPQKVKEKLKEKKL.

Residue glycine 2 is the site of N-myristoyl glycine attachment. EF-hand domains follow at residues 24–59 (TEEELSSWYQSFLKECPSGRITRQEFQTIYSKFFPE), 61–96 (DPKAYAQHVFRSFDANSDGTLDFKEYVIALHMTSAG), 97–132 (KTNQKLEWAFSLYDVDGNGTISKNEVLEIVTAIFKM), and 147–182 (TPEKRAEKIWGFFGKKDDDKLTEKEFIEGTLANKEI). Cysteine 39 is subject to Cysteine sulfenic acid (-SOH). Aspartate 74, asparagine 76, aspartate 78, threonine 80, glutamate 85, aspartate 110, aspartate 112, asparagine 114, threonine 116, and glutamate 121 together coordinate Ca(2+). The tract at residues 189 to 192 (EPQK) is interaction with GRK1. A modulates EF-hand 3 domain calcium binding affinity region spans residues 191–202 (QKVKEKLKEKKL).

Belongs to the recoverin family. As to quaternary structure, homodimer; disulfide-linked. Homodimerization is caused by prolonged intense illumination. May form a complex composed of RHO, GRK1 and RCVRN in a Ca(2+)-dependent manner; RCVRN prevents the interaction between GRK1 and RHO. Interacts (via C-terminus) with GRK1 (via N-terminus); the interaction is Ca(2+)-dependent. Post-translationally, the N-terminal glycine is linked to one of four different types of acyl groups. The most abundant is myristoleate (14:1), but 14:0, 14:2, and 12:0 acyl residues are also present. The Ca(2+) induced exposure of the myristoyl group, known as the calcium-myristoyl switch, promotes RCVRN binding to the photoreceptor cell membranes only when intracellular Ca(2+) concentration is high. Oxidation on Cys-39 occurs in response to prolonged intense illumination and results in the formation of disulfide homodimers, and to a lesser extent disulfide-linked heterodimers. Expressed in the retina (at protein level). Expressed in the pineal gland (at protein level).

It localises to the photoreceptor inner segment. Its subcellular location is the cell projection. The protein resides in the cilium. It is found in the photoreceptor outer segment. The protein localises to the photoreceptor outer segment membrane. It localises to the perikaryon. Acts as a calcium sensor and regulates phototransduction of cone and rod photoreceptor cells. Modulates light sensitivity of cone photoreceptor in dark and dim conditions. In response to high Ca(2+) levels induced by low light levels, prolongs RHO/rhodopsin activation in rod photoreceptor cells by binding to and inhibiting GRK1-mediated phosphorylation of RHO/rhodopsin. Plays a role in scotopic vision/enhances vision in dim light by enhancing signal transfer between rod photoreceptors and rod bipolar cells. Improves rod photoreceptor sensitivity in dim light and mediates response of rod photoreceptors to facilitate detection of change and motion in bright light. This Bos taurus (Bovine) protein is Recoverin (RCVRN).